The sequence spans 448 residues: Phosphoglucosamine mutase (448 aa).

S100 serves as the catalytic Phosphoserine intermediate. Residues S100, D240, D242, and D244 each contribute to the Mg(2+) site. S100 is modified (phosphoserine).

It belongs to the phosphohexose mutase family. It depends on Mg(2+) as a cofactor. In terms of processing, activated by phosphorylation.

It catalyses the reaction alpha-D-glucosamine 1-phosphate = D-glucosamine 6-phosphate. In terms of biological role, catalyzes the conversion of glucosamine-6-phosphate to glucosamine-1-phosphate. The chain is Phosphoglucosamine mutase from Bacillus velezensis (strain DSM 23117 / BGSC 10A6 / LMG 26770 / FZB42) (Bacillus amyloliquefaciens subsp. plantarum).